The following is a 177-amino-acid chain: MSIEKLKAALPEYAKDIKLNLSSITRSSVLDQEQLWGTLLASAAATRNPQVLADIGAEATDHLSAAARHAALGAAAIMGMNNVFYRGRGFLEGRYDDLRPGLRMNIIANPGIPKANFELWSFAVSAINGCSHCLVAHEHTLRTVGVDREAIFEALKAAAIVSGVAQALATIEALSPS.

Cysteine 130 acts as the Proton donor in catalysis. Cysteines 130 and 133 form a disulfide. Cysteine 133 acts as the Cysteine sulfenic acid (-SOH) intermediate in catalysis.

This sequence belongs to the AhpD family. As to quaternary structure, homotrimer.

The enzyme catalyses N(6)-[(R)-dihydrolipoyl]-L-lysyl-[lipoyl-carrier protein] + a hydroperoxide = N(6)-[(R)-lipoyl]-L-lysyl-[lipoyl-carrier protein] + an alcohol + H2O. Functionally, antioxidant protein with alkyl hydroperoxidase activity. Required for the reduction of the AhpC active site cysteine residues and for the regeneration of the AhpC enzyme activity. The chain is Alkyl hydroperoxide reductase AhpD from Mycobacterium bovis (strain ATCC BAA-935 / AF2122/97).